The sequence spans 302 residues: UDP-3-O-acyl-N-acetylglucosamine deacetylase (302 aa).

Zn(2+) contacts are provided by histidine 78, histidine 237, and aspartate 241. Residue histidine 264 is the Proton donor of the active site.

This sequence belongs to the LpxC family. Zn(2+) serves as cofactor.

It catalyses the reaction a UDP-3-O-[(3R)-3-hydroxyacyl]-N-acetyl-alpha-D-glucosamine + H2O = a UDP-3-O-[(3R)-3-hydroxyacyl]-alpha-D-glucosamine + acetate. Its pathway is glycolipid biosynthesis; lipid IV(A) biosynthesis; lipid IV(A) from (3R)-3-hydroxytetradecanoyl-[acyl-carrier-protein] and UDP-N-acetyl-alpha-D-glucosamine: step 2/6. Catalyzes the hydrolysis of UDP-3-O-myristoyl-N-acetylglucosamine to form UDP-3-O-myristoylglucosamine and acetate, the committed step in lipid A biosynthesis. The sequence is that of UDP-3-O-acyl-N-acetylglucosamine deacetylase from Hahella chejuensis (strain KCTC 2396).